Here is a 266-residue protein sequence, read N- to C-terminus: Dioicin-2 (266 aa).

Cystine bridges form between C32–C263 and C85–C102. E176 is a catalytic residue.

It is found in the secreted. The protein localises to the extracellular space. The protein resides in the golgi apparatus. Its subcellular location is the vacuole. The catalysed reaction is Endohydrolysis of the N-glycosidic bond at one specific adenosine on the 28S rRNA.. Its function is as follows. Nicks pBR322 dsDNA. Has adenine polynucleotide glycosidase activity on herring sperm ssDNA. The polypeptide is Dioicin-2 (Phytolacca dioica (Bella sombra tree)).